Consider the following 115-residue polypeptide: Virulence-associated protein A' (115 aa).

In terms of domain architecture, HTH cro/C1-type spans 16–70 (IKSDLDGLGINITEAAKALDVTRAALSEIINGKRGISAKMAWKLSKAFTNSDPEF). The segment at residues 27–46 (ITEAAKALDVTRAALSEIIN) is a DNA-binding region (H-T-H motif).

Belongs to the VapA/VapI family.

This Dichelobacter nodosus (Bacteroides nodosus) protein is Virulence-associated protein A' (vapA').